We begin with the raw amino-acid sequence, 533 residues long: Glucose-6-phosphate isomerase (533 aa).

Glu-341 (proton donor) is an active-site residue. Catalysis depends on residues His-372 and Lys-501.

This sequence belongs to the GPI family.

Its subcellular location is the cytoplasm. The catalysed reaction is alpha-D-glucose 6-phosphate = beta-D-fructose 6-phosphate. The protein operates within carbohydrate biosynthesis; gluconeogenesis. It participates in carbohydrate degradation; glycolysis; D-glyceraldehyde 3-phosphate and glycerone phosphate from D-glucose: step 2/4. Its function is as follows. Catalyzes the reversible isomerization of glucose-6-phosphate to fructose-6-phosphate. The sequence is that of Glucose-6-phosphate isomerase from Cereibacter sphaeroides (strain KD131 / KCTC 12085) (Rhodobacter sphaeroides).